A 486-amino-acid polypeptide reads, in one-letter code: ATP synthase subunit beta (486 aa).

Glycine 164 to threonine 171 lines the ATP pocket.

Belongs to the ATPase alpha/beta chains family. In terms of assembly, F-type ATPases have 2 components, CF(1) - the catalytic core - and CF(0) - the membrane proton channel. CF(1) has five subunits: alpha(3), beta(3), gamma(1), delta(1), epsilon(1). CF(0) has four main subunits: a(1), b(1), b'(1) and c(9-12).

The protein resides in the cellular thylakoid membrane. It carries out the reaction ATP + H2O + 4 H(+)(in) = ADP + phosphate + 5 H(+)(out). In terms of biological role, produces ATP from ADP in the presence of a proton gradient across the membrane. The catalytic sites are hosted primarily by the beta subunits. The polypeptide is ATP synthase subunit beta (Prochlorococcus marinus (strain MIT 9215)).